Consider the following 579-residue polypeptide: Tetratricopeptide repeat protein 39C (579 aa).

Positions glutamine 182–threonine 197 are enriched in polar residues. Residues glutamine 182–arginine 202 are disordered. 3 TPR repeats span residues serine 311–glutamine 344, histidine 349–serine 382, and glycine 481–arginine 514.

It belongs to the TTC39 family.

This chain is Tetratricopeptide repeat protein 39C (ttc39c), found in Danio rerio (Zebrafish).